A 393-amino-acid chain; its full sequence is HORMA domain-containing protein 1 (393 aa).

Residues 24 to 226 (QQSLVLVKRL…TPFHTFKVKV (203 aa)) enclose the HORMA domain. The segment at 322-393 (SKTSELDVSE…RKFSEPKERI (72 aa)) is disordered. A compositionally biased stretch (basic and acidic residues) spans 352–361 (KSKENRKRTQ). Ser-375 is subject to Phosphoserine. Positions 382–385 (KRRK) match the Nuclear localization signal motif.

In terms of assembly, interacts with HORMAD2. Interacts with IHO1. Phosphorylated at Ser-376 in a SPO11-dependent manner.

It localises to the nucleus. It is found in the chromosome. In terms of biological role, plays a key role in meiotic progression. Regulates 3 different functions during meiosis: ensures that sufficient numbers of processed DNA double-strand breaks (DSBs) are available for successful homology search by increasing the steady-state numbers of single-stranded DSB ends. Promotes synaptonemal-complex formation independently of its role in homology search. Plays a key role in the male mid-pachytene checkpoint and the female meiotic prophase checkpoint: required for efficient build-up of ATR activity on unsynapsed chromosome regions, a process believed to form the basis of meiotic silencing of unsynapsed chromatin (MSUC) and meiotic prophase quality control in both sexes. This Bos taurus (Bovine) protein is HORMA domain-containing protein 1 (HORMAD1).